Reading from the N-terminus, the 231-residue chain is Claudin-10 (231 aa).

A helical membrane pass occupies residues 1–21 (MASTASEIIAFMVSISGWVLV). The Extracellular portion of the chain corresponds to 22-80 (SSTLPTDYWKVSTIDGTVITTATYWANLWKTCVTDSTGVSNCKDFPSMLALDGYIQACR). Residues 81-101 (GLMIAAVSLGFFGSIFALIGM) traverse the membrane as a helical segment. Over 102–115 (KCTKVGGSDKAKAK) the chain is Cytoplasmic. A helical membrane pass occupies residues 116–136 (IACLAGIVFILSGLCSMTGCS). The Extracellular portion of the chain corresponds to 137 to 160 (LYANKITTEFFDPLFVEQKYELGA). A helical transmembrane segment spans residues 161-181 (ALFIGWAGASLCLIGGVIFCF). The Cytoplasmic segment spans residues 182–231 (SISDNNKAPRMGYTYNGATSVMSSRTKYHGREGDLKTPNPSKQFDKNAYV).

The protein belongs to the claudin family. As to quaternary structure, can form homodimers both in trans (interaction between CLDN10 molecules in opposing membranes) and in cis (interaction between CLDN10 molecules within one membrane). Interacts with CLDN19.

The protein resides in the cell junction. Its subcellular location is the tight junction. It localises to the cell membrane. It catalyses the reaction Na(+)(in) = Na(+)(out). It carries out the reaction Li(+)(in) = Li(+)(out). The enzyme catalyses K(+)(in) = K(+)(out). The catalysed reaction is Rb(+)(in) = Rb(+)(out). It catalyses the reaction Cs(+)(in) = Cs(+)(out). It carries out the reaction NH4(+)(in) = NH4(+)(out). The enzyme catalyses methylamine(out) = methylamine(in). The catalysed reaction is Mg(2+)(in) = Mg(2+)(out). It catalyses the reaction Ca(2+)(in) = Ca(2+)(out). It carries out the reaction Sr(2+)(in) = Sr(2+)(out). The enzyme catalyses chloride(in) = chloride(out). The catalysed reaction is nitrate(in) = nitrate(out). In terms of biological role, forms paracellular channels: polymerizes in tight junction strands with cation- and anion-selective channels through the strands, conveying epithelial permeability in a process known as paracellular tight junction permeability. In sweat glands and in the thick ascending limb (TAL) of Henle's loop in kidney, it controls paracellular sodium permeability which is essential for proper sweat production and renal function. In renal proximal tubules, it conveys selective chloride over hydrogencarbonate anion permeability which is required for renal chloride reabsorption and salt homeostasis. This chain is Claudin-10 (CLDN10), found in Bos taurus (Bovine).